Consider the following 114-residue polypeptide: Small ribosomal subunit protein uS15 (114 aa).

This sequence belongs to the universal ribosomal protein uS15 family.

This is Small ribosomal subunit protein uS15 (RpS13) from Musca domestica (House fly).